Consider the following 387-residue polypeptide: Acetate kinase (387 aa).

Residue asparagine 14 participates in Mg(2+) binding. ATP is bound at residue lysine 21. Arginine 80 is a binding site for substrate. Aspartate 137 (proton donor/acceptor) is an active-site residue. Residues 197–201, 271–273, and 319–323 each bind ATP; these read HLGNG, DFR, and GIGEN. A Mg(2+)-binding site is contributed by glutamate 373.

Belongs to the acetokinase family. Homodimer. Mg(2+) serves as cofactor. It depends on Mn(2+) as a cofactor.

The protein resides in the cytoplasm. The enzyme catalyses acetate + ATP = acetyl phosphate + ADP. Its pathway is metabolic intermediate biosynthesis; acetyl-CoA biosynthesis; acetyl-CoA from acetate: step 1/2. Its function is as follows. Catalyzes the formation of acetyl phosphate from acetate and ATP. Can also catalyze the reverse reaction. The chain is Acetate kinase from Mycobacterium avium (strain 104).